The sequence spans 401 residues: Heat stress transcription factor A-4a (401 aa).

Residues 13–107 (LPPFLTKTYE…LMKNIHRRKP (95 aa)) mediate DNA binding. Residues 122 to 188 (PLTDSERVRM…TMVSFVSQVL (67 aa)) form a hydrophobic repeat HR-A/B region. Positions 207 to 213 (RKRRFPR) match the Nuclear localization signal motif. The short motif at 256 to 265 (IAIWENLVSD) is the AHA1 element. Positions 341–350 (DGFWQQFFSE) match the AHA2 motif. A disordered region spans residues 351-373 (NPGSTEQREVQLERKDDKDKAGV). A compositionally biased stretch (basic and acidic residues) spans 356–373 (EQREVQLERKDDKDKAGV). Residues 388-395 (ITEQLGHL) carry the Nuclear export signal motif.

The protein belongs to the HSF family. Class A subfamily. As to quaternary structure, homotrimer. Post-translationally, exhibits temperature-dependent phosphorylation.

It localises to the cytoplasm. The protein localises to the nucleus. Its function is as follows. Transcriptional activator that specifically binds DNA sequence 5'-AGAAnnTTCT-3' known as heat shock promoter elements (HSE). This Arabidopsis thaliana (Mouse-ear cress) protein is Heat stress transcription factor A-4a (HSFA4A).